The following is a 318-amino-acid chain: Methionyl-tRNA formyltransferase (318 aa).

112-115 provides a ligand contact to (6S)-5,6,7,8-tetrahydrofolate; it reads SILP.

The protein belongs to the Fmt family.

The catalysed reaction is L-methionyl-tRNA(fMet) + (6R)-10-formyltetrahydrofolate = N-formyl-L-methionyl-tRNA(fMet) + (6S)-5,6,7,8-tetrahydrofolate + H(+). Attaches a formyl group to the free amino group of methionyl-tRNA(fMet). The formyl group appears to play a dual role in the initiator identity of N-formylmethionyl-tRNA by promoting its recognition by IF2 and preventing the misappropriation of this tRNA by the elongation apparatus. This is Methionyl-tRNA formyltransferase from Shewanella baltica (strain OS155 / ATCC BAA-1091).